The sequence spans 352 residues: MSSRKIIHIDMDAFYASVELREQPHLKGRPVVVAWEGARSVICAASYEARQFGLHSAMSVATAKRLCPQAVYVPPHFDLYRQVSAQIHAVFRRYTDLIEPLSLDEAYLDVTRNFKNIPYASEVAKEIRAAIFAETGLTASAGIAPNKFLAKIASDWRKPNGQFVLPPHKVMAFLETLPLGKIPGVGKVTLKKMQSLGMRTAGDLRRFERGELLNHFGRYGYRLYDLVRGTDERPVKAERERLQISTEITLPEDLPLEQAAGHLPHLAEDLWRQITRKNVEAQSVTLKLKTYDFRIITRTLTYSSVLPDCAALLQAAQMLIARVPPQTEDAFRLIGIGVGHLVPKNQQQDLWA.

The 181-residue stretch at 6 to 186 (IIHIDMDAFY…LPLGKIPGVG (181 aa)) folds into the UmuC domain. 2 residues coordinate Mg(2+): Asp10 and Asp104. Glu105 is an active-site residue.

The protein belongs to the DNA polymerase type-Y family. Monomer. It depends on Mg(2+) as a cofactor.

The protein resides in the cytoplasm. It carries out the reaction DNA(n) + a 2'-deoxyribonucleoside 5'-triphosphate = DNA(n+1) + diphosphate. Functionally, poorly processive, error-prone DNA polymerase involved in untargeted mutagenesis. Copies undamaged DNA at stalled replication forks, which arise in vivo from mismatched or misaligned primer ends. These misaligned primers can be extended by PolIV. Exhibits no 3'-5' exonuclease (proofreading) activity. May be involved in translesional synthesis, in conjunction with the beta clamp from PolIII. This chain is DNA polymerase IV, found in Neisseria meningitidis serogroup C / serotype 2a (strain ATCC 700532 / DSM 15464 / FAM18).